Reading from the N-terminus, the 1321-residue chain is Bile salt export pump (1321 aa).

The Cytoplasmic portion of the chain corresponds to 1–62 (MSDSVILRSV…FSSSKDIWLM (62 aa)). Residues 62–385 (MLMGGVCALL…ASSCLEIFST (324 aa)) form the ABC transmembrane type-1 1 domain. Residues 63–83 (LMGGVCALLHGMAQPGILIIF) form a helical membrane-spanning segment. Residues 84–147 (GIMTDIFIKY…MIKFSGIYAG (64 aa)) lie on the Extracellular side of the membrane. N-linked (GlcNAc...) asparagine glycosylation is found at asparagine 109, asparagine 116, asparagine 122, and asparagine 125. A helical transmembrane segment spans residues 148-168 (VGMTVLILGYFQIRLWVITGA). Over 169–215 (RQIRRMRKIYFRRIMRMEIGWFDCTSVGELNSRFADDIEKINDAIAD) the chain is Cytoplasmic. A helical transmembrane segment spans residues 216–236 (QLAHFLQRMSTAMCGLLLGFY). Over 237 to 240 (RGWK) the chain is Extracellular. The chain crosses the membrane as a helical span at residues 241–261 (LTLVILAVSPLIGIGAAVIGL). Residues 262–319 (SIAKFTELELKAYAKAGSIADEVLSSIRTVAAFGGENKEVERYEKNLVFAQRWGIWKG) are Cytoplasmic-facing. A helical membrane pass occupies residues 320 to 340 (MVMGFFTGYMWCLIFFCYALA). The Extracellular segment spans residues 341–353 (FWYGSTLVLDEEE). Residues 354 to 374 (YTPGTLVQIFLCVILAAMNIG) traverse the membrane as a helical segment. Over 375–755 (HASSCLEIFS…KYNIPEWHYI (381 aa)) the chain is Cytoplasmic. The ABC transporter 1 domain occupies 420-656 (IEFHNVTFHY…KGVYFMLVTL (237 aa)). 455–462 (GSSGAGKS) contributes to the ATP binding site. A Phosphothreonine modification is found at threonine 586. Residue serine 587 is modified to Phosphoserine. Positions 651 to 674 (FMLVTLQSQGDNAHKETSIMGKDA) are interaction with HAX1. Serine 692, serine 703, and serine 706 each carry phosphoserine. The 289-residue stretch at 755–1043 (ILVGSLSAAI…TFSYTPSYAK (289 aa)) folds into the ABC transmembrane type-1 2 domain. Residues 756-776 (LVGSLSAAINGAVTPIYSLLF) traverse the membrane as a helical segment. The Extracellular segment spans residues 777 to 794 (SQLLGTFSLLDKEQQRSE). The helical transmembrane segment at 795-815 (IHSMCLFFVILGCVSIFTQFL) threads the bilayer. Over 816–869 (QGYTFAKSGELLTKRLRKFGFKAMLGQDIGWFDDLRNNPGVLTTRLATDASQVQ) the chain is Cytoplasmic. 2 helical membrane passes run 870–890 (GATGSQVGMMVNSFTNIIAAL) and 891–911 (LIAFFFSWKLSLIITIFFPFL). At 912 to 979 (ALSGAVQTKM…SYKTAVRKAN (68 aa)) the chain is on the cytoplasmic side. The helical transmembrane segment at 980–1000 (IYGLCFAFSQGIAFLANSAAY) threads the bilayer. Topologically, residues 1001-1011 (RYGGYLIAYEG) are extracellular. A helical membrane pass occupies residues 1012-1032 (LGFSHVFRVVSSVALSATAVG). Over 1033–1321 (RTFSYTPSYA…KLVITGAPIS (289 aa)) the chain is Cytoplasmic. Residues 1078–1316 (IDFIDCKFTY…KGAYYKLVIT (239 aa)) form the ABC transporter 2 domain. 1113-1120 (GSSGCGKS) provides a ligand contact to ATP. Serine 1321 carries the post-translational modification Phosphoserine.

The protein belongs to the ABC transporter superfamily. ABCB family. Multidrug resistance exporter (TC 3.A.1.201) subfamily. In terms of assembly, interacts with HAX1. Interacts with the adapter protein complex 2 (AP-2) throught AP2A2 or AP2A1; this interaction regulates cell membrane expression of ABCB11 through its internalization in a clathrin-dependent manner and its subsequent degradation. Ubiquitinated; short-chain ubiquitination regulates cell-Surface expression of ABCB11. In terms of processing, N-glycosylated. In terms of tissue distribution, expressed predominantly, if not exclusively in the liver, where it was further localized to the canalicular microvilli and to subcanalicular vesicles of the hepatocytes by in situ.

The protein resides in the apical cell membrane. It is found in the recycling endosome membrane. The protein localises to the endosome. Its subcellular location is the cell membrane. The enzyme catalyses cholate(in) + ATP + H2O = cholate(out) + ADP + phosphate + H(+). It catalyses the reaction taurocholate(in) + ATP + H2O = taurocholate(out) + ADP + phosphate + H(+). The catalysed reaction is glycocholate(in) + ATP + H2O = glycocholate(out) + ADP + phosphate + H(+). It carries out the reaction glycochenodeoxycholate(in) + ATP + H2O = glycochenodeoxycholate(out) + ADP + phosphate + H(+). The enzyme catalyses taurochenodeoxycholate(in) + ATP + H2O = taurochenodeoxycholate(out) + ADP + phosphate + H(+). It catalyses the reaction glycoursodeoxycholate(in) + ATP + H2O = glycoursodeoxycholate(out) + ADP + phosphate + H(+). The catalysed reaction is tauroursodeoxycholate(in) + ATP + H2O = tauroursodeoxycholate(out) + ADP + phosphate + H(+). It carries out the reaction taurodeoxycholate(in) + ATP + H2O = taurodeoxycholate(out) + ADP + phosphate + H(+). The enzyme catalyses pravastatin(in) + ATP + H2O = pravastatin(out) + ADP + phosphate + H(+). With respect to regulation, the uptake of taurocholate is inhibited by taurolithocholate sulfate with an IC(50) of 52.9 uM. Pravastatin competitively inhibits the transport of taurocholic acid. Cyclosporin A, glibenclamide, rifampicin and troglitazonestrongly competitively inhibit the transport activity of taurocholate. The canalicular transport activity of taurocholate is strongly dependent on canalicular membrane cholesterol content. The uptake of taurocholate is increased by short- and medium-chain fatty acids. Cholesterol increases transport capacity of taurocholate without affecting the affinity for the substrate. Its function is as follows. Catalyzes the transport of the major hydrophobic bile salts, such as taurine and glycine-conjugated cholic acid across the canalicular membrane of hepatocytes in an ATP-dependent manner, therefore participates in hepatic bile acid homeostasis and consequently to lipid homeostasis through regulation of biliary lipid secretion in a bile salts dependent manner. Transports taurine-conjugated bile salts more rapidly than glycine-conjugated bile salts. Also transports non-bile acid compounds, such as pravastatin and fexofenadine in an ATP-dependent manner and may be involved in their biliary excretion. The sequence is that of Bile salt export pump from Rattus norvegicus (Rat).